We begin with the raw amino-acid sequence, 102 residues long: NADH-quinone oxidoreductase subunit K (102 aa).

A run of 3 helical transmembrane segments spans residues 5-25 (IAHYLTVSAVLFTLGVFGIFL), 31-51 (IVILMSVELILLAVNINFVAF), and 66-86 (FVLTVAAAEAAIGLAILVVFF).

Belongs to the complex I subunit 4L family. As to quaternary structure, NDH-1 is composed of 14 different subunits. Subunits NuoA, H, J, K, L, M, N constitute the membrane sector of the complex.

It is found in the cell inner membrane. The catalysed reaction is a quinone + NADH + 5 H(+)(in) = a quinol + NAD(+) + 4 H(+)(out). Functionally, NDH-1 shuttles electrons from NADH, via FMN and iron-sulfur (Fe-S) centers, to quinones in the respiratory chain. The immediate electron acceptor for the enzyme in this species is believed to be ubiquinone. Couples the redox reaction to proton translocation (for every two electrons transferred, four hydrogen ions are translocated across the cytoplasmic membrane), and thus conserves the redox energy in a proton gradient. The chain is NADH-quinone oxidoreductase subunit K from Mesorhizobium japonicum (strain LMG 29417 / CECT 9101 / MAFF 303099) (Mesorhizobium loti (strain MAFF 303099)).